A 474-amino-acid chain; its full sequence is Trigger factor (474 aa).

In terms of domain architecture, PPIase FKBP-type spans 171–258; the sequence is GDVAVIDFQG…LKELKTRDLP (88 aa). Residues 441 to 474 are disordered; it reads TEVDAASATVETTATETAEEAPEAPKAKKGKKKA. Residues 444 to 456 show a composition bias toward low complexity; that stretch reads DAASATVETTATE.

Belongs to the FKBP-type PPIase family. Tig subfamily.

Its subcellular location is the cytoplasm. The catalysed reaction is [protein]-peptidylproline (omega=180) = [protein]-peptidylproline (omega=0). In terms of biological role, involved in protein export. Acts as a chaperone by maintaining the newly synthesized protein in an open conformation. Functions as a peptidyl-prolyl cis-trans isomerase. The chain is Trigger factor from Synechococcus elongatus (strain ATCC 33912 / PCC 7942 / FACHB-805) (Anacystis nidulans R2).